Reading from the N-terminus, the 169-residue chain is Thiol peroxidase (169 aa).

Residues 19 to 167 form the Thioredoxin domain; the sequence is LKVGDRAPEA…YDEVVNKVKE (149 aa). The active-site Cysteine sulfenic acid (-SOH) intermediate is Cys-61. Cysteines 61 and 95 form a disulfide.

The protein belongs to the peroxiredoxin family. Tpx subfamily. Homodimer.

It carries out the reaction a hydroperoxide + [thioredoxin]-dithiol = an alcohol + [thioredoxin]-disulfide + H2O. Functionally, thiol-specific peroxidase that catalyzes the reduction of hydrogen peroxide and organic hydroperoxides to water and alcohols, respectively. Plays a role in cell protection against oxidative stress by detoxifying peroxides. In Aquifex aeolicus (strain VF5), this protein is Thiol peroxidase.